The following is a 197-amino-acid chain: Holliday junction branch migration complex subunit RuvA (197 aa).

The interval M1–V63 is domain I. The interval N64–L142 is domain II. Residues L142–P146 are flexible linker. A domain III region spans residues A147–K197.

This sequence belongs to the RuvA family. Homotetramer. Forms an RuvA(8)-RuvB(12)-Holliday junction (HJ) complex. HJ DNA is sandwiched between 2 RuvA tetramers; dsDNA enters through RuvA and exits via RuvB. An RuvB hexamer assembles on each DNA strand where it exits the tetramer. Each RuvB hexamer is contacted by two RuvA subunits (via domain III) on 2 adjacent RuvB subunits; this complex drives branch migration. In the full resolvosome a probable DNA-RuvA(4)-RuvB(12)-RuvC(2) complex forms which resolves the HJ.

It localises to the cytoplasm. In terms of biological role, the RuvA-RuvB-RuvC complex processes Holliday junction (HJ) DNA during genetic recombination and DNA repair, while the RuvA-RuvB complex plays an important role in the rescue of blocked DNA replication forks via replication fork reversal (RFR). RuvA specifically binds to HJ cruciform DNA, conferring on it an open structure. The RuvB hexamer acts as an ATP-dependent pump, pulling dsDNA into and through the RuvAB complex. HJ branch migration allows RuvC to scan DNA until it finds its consensus sequence, where it cleaves and resolves the cruciform DNA. This Lactococcus lactis subsp. cremoris (strain SK11) protein is Holliday junction branch migration complex subunit RuvA.